Consider the following 28-residue polypeptide: Dermaseptin-SP1 (28 aa).

Expressed by the skin glands.

Its subcellular location is the secreted. Probable antimicrobial peptide which stimulates insulin-release in glucose-responsive BRIN-BD 11 cells. This is Dermaseptin-SP1 from Agalychnis spurrelli (Gliding leaf frog).